Reading from the N-terminus, the 475-residue chain is Eukaryotic translation initiation factor 2 subunit 3 (475 aa).

Positions 38–247 constitute a tr-type G domain; that stretch reads QATINIGTIG…IVNKIPVPPR (210 aa). Positions 47–54 are G1; that stretch reads GHVAHGKS. Residue 50 to 55 coordinates GTP; the sequence is AHGKST. The tract at residues 75 to 79 is G2; it reads NITIK. A G3 region spans residues 133-136; that stretch reads DCPG. GTP contacts are provided by residues 189 to 192 and 224 to 226; these read NKID and SAQ. A G4 region spans residues 189–192; that stretch reads NKID. The tract at residues 224 to 226 is G5; it reads SAQ. Residues 456–468 form an interacts with CDC123 region; sequence GQIFGGKTITPVL.

It belongs to the TRAFAC class translation factor GTPase superfamily. Classic translation factor GTPase family. EIF2G subfamily. As to quaternary structure, eukaryotic translation initiation factor 2 eIF2 is a heterotrimeric complex composed of an alpha, a beta and a gamma subunit. The factors eIF-1, eIF-2, eIF-3, TIF5/eIF-5 and methionyl-tRNAi form a multifactor complex (MFC) that may bind to the 40S ribosome.

It localises to the cytoplasm. It is found in the cytosol. The enzyme catalyses GTP + H2O = GDP + phosphate + H(+). Its function is as follows. As a subunit of eukaryotic initiation factor 2 eIF2, involved in the early steps of protein synthesis. In the presence of GTP, eIF-2 forms a ternary complex with initiator tRNA Met-tRNAi and then recruits the 40S ribosomal complex and initiation factors eIF-1, eIF-1A and eIF-3 to form the 43S pre-initiation complex (43S PIC), a step that determines the rate of protein translation. The 43S PIC binds to mRNA and scans downstream to the initiation codon, where it forms a 48S initiation complex by codon-anticodon base pairing. This leads to the displacement of eIF-1 to allow GTPase-activating protein (GAP) eIF-5-mediated hydrolysis of eIF2-bound GTP. Hydrolysis of GTP and release of Pi, which makes GTP hydrolysis irreversible, causes the release of the eIF-2-GDP binary complex from the 40S subunit, an event that is essential for the subsequent joining of the 60S ribosomal subunit to form an elongation-competent 80S ribosome. In order for eIF-2 to recycle and catalyze another round of initiation, the GDP bound to eIF-2 must be exchanged with GTP by way of a reaction catalyzed by GDP-GTP exchange factor (GEF) eIF-2B. The chain is Eukaryotic translation initiation factor 2 subunit 3 from Drosophila melanogaster (Fruit fly).